Consider the following 373-residue polypeptide: Innexin shaking-B (373 aa).

Residues 1–21 (MLDIFRGLKSLVKISHVNTDS) are Cytoplasmic-facing. A helical transmembrane segment spans residues 22–42 (PVFRLHYSITVIILMSFSLIV). Residues 43–106 (TTRQYVGNPI…SAEATAADKK (64 aa)) lie on the Extracellular side of the membrane. Residues 107–127 (IYKYYQWVCFCLFFQAILFYT) form a helical membrane-spanning segment. Topologically, residues 128-176 (PRWLWKSWEGGKIHALMMDLDIGICSEIEKKQKKKLLLDYLWDNLRYHN) are cytoplasmic. A helical membrane pass occupies residues 177–199 (WWAYRYYVCEFLSLCNVIGQMFL). Residues 200–268 (MNRFFDGEFM…ILPLNVVNEK (69 aa)) are Extracellular-facing. A helical membrane pass occupies residues 269–289 (IYIFLWFWFIILTILTTLTIF). At 290–373 (YRIIIIFSPR…PGMKGEIQDA (84 aa)) the chain is on the cytoplasmic side.

Belongs to the pannexin family. Monomer.

The protein resides in the cell membrane. The protein localises to the cell junction. Its subcellular location is the gap junction. In terms of biological role, structural component of the gap junctions at electrical synapses in distal and mid-depth levels in the lamina. The sequence is that of Innexin shaking-B from Anopheles gambiae (African malaria mosquito).